A 187-amino-acid polypeptide reads, in one-letter code: UPF0340 protein SPN23F05980 (187 aa).

This sequence belongs to the UPF0340 family.

The protein is UPF0340 protein SPN23F05980 of Streptococcus pneumoniae (strain ATCC 700669 / Spain 23F-1).